Consider the following 336-residue polypeptide: Quinolinate synthase (336 aa).

Iminosuccinate-binding residues include His-25 and Ser-42. Cys-86 is a [4Fe-4S] cluster binding site. Iminosuccinate contacts are provided by residues 117–119 (YIN) and Ser-138. Cys-198 serves as a coordination point for [4Fe-4S] cluster. Iminosuccinate is bound by residues 224-226 (HPE) and Thr-241. Cys-288 lines the [4Fe-4S] cluster pocket.

Belongs to the quinolinate synthase family. Type 3 subfamily. It depends on [4Fe-4S] cluster as a cofactor.

It localises to the cytoplasm. The catalysed reaction is iminosuccinate + dihydroxyacetone phosphate = quinolinate + phosphate + 2 H2O + H(+). Its pathway is cofactor biosynthesis; NAD(+) biosynthesis; quinolinate from iminoaspartate: step 1/1. Its function is as follows. Catalyzes the condensation of iminoaspartate with dihydroxyacetone phosphate to form quinolinate. The polypeptide is Quinolinate synthase (Helicobacter pylori (strain ATCC 700392 / 26695) (Campylobacter pylori)).